Consider the following 138-residue polypeptide: Ribosome-binding factor A (138 aa).

Residues 1 to 20 show a composition bias toward low complexity; it reads MSSRPPSSSGPAGIPKGAPS. Residues 1–21 form a disordered region; that stretch reads MSSRPPSSSGPAGIPKGAPSQ.

The protein belongs to the RbfA family. Monomer. Binds 30S ribosomal subunits, but not 50S ribosomal subunits or 70S ribosomes.

Its subcellular location is the cytoplasm. Its function is as follows. One of several proteins that assist in the late maturation steps of the functional core of the 30S ribosomal subunit. Associates with free 30S ribosomal subunits (but not with 30S subunits that are part of 70S ribosomes or polysomes). Required for efficient processing of 16S rRNA. May interact with the 5'-terminal helix region of 16S rRNA. The protein is Ribosome-binding factor A of Granulibacter bethesdensis (strain ATCC BAA-1260 / CGDNIH1).